Here is a 329-residue protein sequence, read N- to C-terminus: GTP 3',8-cyclase (329 aa).

One can recognise a Radical SAM core domain in the interval 8 to 234; sequence AFARKFYYLR…QLRQRSDGPA (227 aa). Arg-17 lines the GTP pocket. 2 residues coordinate [4Fe-4S] cluster: Cys-24 and Cys-28. Tyr-30 is an S-adenosyl-L-methionine binding site. Cys-31 lines the [4Fe-4S] cluster pocket. Arg-68 lines the GTP pocket. S-adenosyl-L-methionine is bound at residue Gly-72. Position 99 (Thr-99) interacts with GTP. S-adenosyl-L-methionine is bound at residue Ser-123. Lys-160 contributes to the GTP binding site. An S-adenosyl-L-methionine-binding site is contributed by Met-194. Cys-257 and Cys-260 together coordinate [4Fe-4S] cluster. 262 to 264 is a binding site for GTP; the sequence is RLR. Cys-274 provides a ligand contact to [4Fe-4S] cluster.

Belongs to the radical SAM superfamily. MoaA family. Monomer and homodimer. [4Fe-4S] cluster is required as a cofactor.

It catalyses the reaction GTP + AH2 + S-adenosyl-L-methionine = (8S)-3',8-cyclo-7,8-dihydroguanosine 5'-triphosphate + 5'-deoxyadenosine + L-methionine + A + H(+). The protein operates within cofactor biosynthesis; molybdopterin biosynthesis. Its function is as follows. Catalyzes the cyclization of GTP to (8S)-3',8-cyclo-7,8-dihydroguanosine 5'-triphosphate. This Salmonella heidelberg (strain SL476) protein is GTP 3',8-cyclase.